We begin with the raw amino-acid sequence, 332 residues long: UDP-N-acetylenolpyruvoylglucosamine reductase (332 aa).

The 170-residue stretch at 15 to 184 (IDVSAACFLE…TYVSFRLSKR (170 aa)) folds into the FAD-binding PCMH-type domain. Arg-160 is a catalytic residue. The active-site Proton donor is Ser-232. Residue Glu-328 is part of the active site.

It belongs to the MurB family. The cofactor is FAD.

It localises to the cytoplasm. It catalyses the reaction UDP-N-acetyl-alpha-D-muramate + NADP(+) = UDP-N-acetyl-3-O-(1-carboxyvinyl)-alpha-D-glucosamine + NADPH + H(+). The protein operates within cell wall biogenesis; peptidoglycan biosynthesis. Functionally, cell wall formation. The sequence is that of UDP-N-acetylenolpyruvoylglucosamine reductase from Bacteroides fragilis (strain YCH46).